The chain runs to 101 residues: Large ribosomal subunit protein P1 (101 aa).

Over residues 61 to 72 (AAPAAAAAPAAA) the composition is skewed to low complexity. Positions 61 to 101 (AAPAAAAAPAAAEEAEEEAEEEEEEEEAEEEAAAGLGALFG) are disordered. The span at 73–92 (EEAEEEAEEEEEEEEAEEEA) shows a compositional bias: acidic residues.

Belongs to the eukaryotic ribosomal protein P1/P2 family. In terms of assembly, part of the 50S ribosomal subunit. Homodimer, it forms part of the ribosomal stalk which helps the ribosome interact with GTP-bound translation factors. Forms a heptameric uL10/P0(P1)2(P1)2(P1)2 complex, where uL10/P0 forms an elongated spine to which the P1 dimers bind in a sequential fashion.

Functionally, forms part of the ribosomal stalk, playing a central role in the interaction of the ribosome with GTP-bound translation factors. The sequence is that of Large ribosomal subunit protein P1 from Methanothermobacter thermautotrophicus (strain ATCC 29096 / DSM 1053 / JCM 10044 / NBRC 100330 / Delta H) (Methanobacterium thermoautotrophicum).